The sequence spans 398 residues: O-methyltransferase aoiO (398 aa).

An S-adenosyl-L-methionine-binding site is contributed by D251. The Proton acceptor role is filled by H299.

It belongs to the class I-like SAM-binding methyltransferase superfamily. Cation-independent O-methyltransferase family.

In terms of biological role, O-methyltransferase; part of the gene cluster that mediates the biosynthesis of a methylated derivative of known natural products orthosporin and diaporthin. Seems not to be involved in the biosynthesis of the identified final product of the pathway and its function has still to be determined. The polypeptide is O-methyltransferase aoiO (Aspergillus oryzae (strain ATCC 42149 / RIB 40) (Yellow koji mold)).